The chain runs to 147 residues: Protein phosphatase 1 regulatory subunit 14A (147 aa).

Residues 1–11 show a composition bias toward basic residues; sequence MAAQRLGKRVL. The tract at residues 1 to 37 is disordered; that stretch reads MAAQRLGKRVLSKLQSPSRARGPGGSPGGLQKRHARV. Phosphoserine is present on serine 26. The inhibitory stretch occupies residues 35–120; the sequence is ARVTVKYDRR…LLAKLQGLHR (86 aa). Threonine 38 carries the post-translational modification Phosphothreonine; by PKC. A disordered region spans residues 118 to 147; sequence LHRQPGLRQPSPSHDGSLSPLQDRARTAHP. The span at 127–137 shows a compositional bias: polar residues; the sequence is PSPSHDGSLSP. Phosphoserine is present on residues serine 128, serine 134, and serine 136.

The protein belongs to the PP1 inhibitor family. In terms of tissue distribution, isoform 1 is detected in aorta and testis. Isoform 2 is detected in aorta.

It localises to the cytoplasm. Its function is as follows. Inhibitor of PPP1CA. Has over 1000-fold higher inhibitory activity when phosphorylated, creating a molecular switch for regulating the phosphorylation status of PPP1CA substrates and smooth muscle contraction. This is Protein phosphatase 1 regulatory subunit 14A (PPP1R14A) from Homo sapiens (Human).